The sequence spans 205 residues: 3-demethoxyubiquinol 3-hydroxylase (205 aa).

Fe cation-binding residues include Glu-54, Glu-84, His-87, Glu-136, Glu-168, and His-171.

The protein belongs to the COQ7 family. Requires Fe cation as cofactor.

The protein resides in the cell membrane. The catalysed reaction is a 5-methoxy-2-methyl-3-(all-trans-polyprenyl)benzene-1,4-diol + AH2 + O2 = a 3-demethylubiquinol + A + H2O. It functions in the pathway cofactor biosynthesis; ubiquinone biosynthesis. Functionally, catalyzes the hydroxylation of 2-nonaprenyl-3-methyl-6-methoxy-1,4-benzoquinol during ubiquinone biosynthesis. This chain is 3-demethoxyubiquinol 3-hydroxylase, found in Paracidovorax citrulli (strain AAC00-1) (Acidovorax citrulli).